The chain runs to 1425 residues: Ferlin 1 (1425 aa).

C2 domains are found at residues 1–123 (MAAK…RQWV), 161–281 (VNEG…PRWF), and 506–629 (TKAG…PVWL). Positions 871–952 (RPQASRLSRE…ALAASPEEET (82 aa)) are disordered. Basic and acidic residues-rich tracts occupy residues 877–889 (LSREGTSRDERGK) and 912–926 (ETEKKGDPVAEKKEG). 2 C2 domains span residues 1032–1160 (EMDA…EQMV) and 1192–1319 (RADY…QQHY). The helical transmembrane segment at 1404 to 1424 (TGVWMTVAGIIALVIFVMFLL) threads the bilayer.

It belongs to the ferlin family.

Its subcellular location is the golgi apparatus. The protein localises to the trans-Golgi network membrane. It is found in the endosome membrane. The protein resides in the cytoplasm. Plays a role in microneme replenishment, probably at the vesicular trafficking level. Directs microneme organelle traffic differentially based on microneme population. Regulates microneme secretion: facilitates microneme membrane fusion with the plasma membrane. The protein is Ferlin 1 of Toxoplasma gondii.